The following is a 727-amino-acid chain: 5'-AMP-activated serine/threonine-protein kinase catalytic subunit alpha (727 aa).

Residues 31-284 form the Protein kinase domain; that stretch reads YRLDKTLGIG…IHEIRNHPWF (254 aa). ATP-binding positions include 37–45 and K60; that span reads LGIGSFGKV. Residue D154 is the Proton acceptor of the active site. T188 is subject to Phosphothreonine. The disordered stretch occupies residues 382–590; sequence FTTTTGFNPS…GSNNNSYEGG (209 aa). 2 stretches are compositionally biased toward low complexity: residues 391 to 483 and 494 to 586; these read SNSN…SSIS and NLNN…NNNS. The 49-residue stretch at 679–727 folds into the KA1 domain; the sequence is RMVNGKPIKLVLQLFRVAENRYLLDIKKIEGEIFIFFDICSLMLEELNL.

The protein belongs to the protein kinase superfamily. CAMK Ser/Thr protein kinase family. SNF1 subfamily. As to quaternary structure, heterotrimer of an alpha catalytic subunit, a beta and a gamma non-catalytic subunits.

The catalysed reaction is L-seryl-[protein] + ATP = O-phospho-L-seryl-[protein] + ADP + H(+). It catalyses the reaction L-threonyl-[protein] + ATP = O-phospho-L-threonyl-[protein] + ADP + H(+). Activated enzyme phosphorylates target proteins and initiates downstream signaling pathways that shift metabolism from anabolic to catabolic pathways. Acts as a highly sensitive cellular energy sensor. The protein is 5'-AMP-activated serine/threonine-protein kinase catalytic subunit alpha (snfA) of Dictyostelium discoideum (Social amoeba).